The sequence spans 2849 residues: Immunoglobulin-like and fibronectin type III domain-containing protein 1 (2849 aa).

The interval 82–108 is disordered; sequence AGSAARPDGSGSESLAASSSWKPRRRL. A compositionally biased stretch (low complexity) spans 90–101; sequence GSGSESLAASSS. The region spanning 187 to 277 is the Ig-like 1 domain; sequence PDFKQKPVTL…GEATCSVRLT (91 aa). Residues 347–380 are a coiled coil; it reads IVDFRGMLRKLQEMKKEQEDRMAQYVSAIANLRH. One can recognise an Ig-like 2 domain in the interval 468–557; sequence PRVVVPLAET…SSAWLVVEGG (90 aa). 12 disordered regions span residues 577 to 600, 652 to 760, 864 to 924, 962 to 981, 1061 to 1103, 1221 to 1258, 1312 to 1338, 1350 to 1384, 1498 to 1523, 1654 to 1675, 1724 to 1780, and 1827 to 2055; these read LASE…RGSL, VTLP…AGQR, YPGQ…DLRS, VGQR…IGPQ, EEEF…EGMA, TVGS…SSWG, STVG…SEGH, RDGS…PDGE, ETGR…MGSE, EWKD…SEEI, QQGV…ATSH, and GAAG…SMDH. Positions 717–742 are enriched in basic and acidic residues; the sequence is HPRDRRLESRGEGQEHSEGHGSELDR. Polar residues predominate over residues 866–880; it reads GQTSEGNDTQKSSLS. Gly residues predominate over residues 1070-1084; it reads RSQGKGSRGGMGLGG. Polar residues predominate over residues 1873-1882; that stretch reads SKPQEPQNEL. 2 stretches are compositionally biased toward basic and acidic residues: residues 1988 to 2004 and 2012 to 2021; these read SEDR…DRRQ and SRRDTQEGRS. Residues 2034–2137 enclose the Ig-like 3 domain; it reads PRSRYQPGTG…GCQHSEASLT (104 aa). Fibronectin type-III domains follow at residues 2244-2339, 2344-2443, and 2445-2540; these read PPQG…VAPE, PPSA…MRPP, and PVRD…AMPA. The Ig-like 4 domain maps to 2544 to 2628; sequence PRFLMDSGTK…LRNLQGKEAT (85 aa). In terms of domain architecture, Fibronectin type-III 4 spans 2641-2735; the sequence is APGSIYLQEN…TSQPWCIPRQ (95 aa). An Ig-like 5 domain is found at 2749-2845; it reads PDLSQKPRFL…AVSTATLIVT (97 aa).

Interacts with FLNC. Interacts with KY. In terms of tissue distribution, isoform 1, isoform 3 and isoform 4 are expressed in skeletal muscle while isoform 2 is detected in both skeletal muscle and heart (at protein level).

The protein resides in the nucleus. The protein localises to the cytoplasm. It localises to the myofibril. It is found in the sarcomere. Its subcellular location is the z line. This is Immunoglobulin-like and fibronectin type III domain-containing protein 1 (Igfn1) from Mus musculus (Mouse).